The following is a 166-amino-acid chain: EEF1A lysine methyltransferase 1 (166 aa).

It belongs to the class I-like SAM-binding methyltransferase superfamily. EFM5 family.

The protein resides in the cytoplasm. The enzyme catalyses L-lysyl-[protein] + 3 S-adenosyl-L-methionine = N(6),N(6),N(6)-trimethyl-L-lysyl-[protein] + 3 S-adenosyl-L-homocysteine + 3 H(+). Its function is as follows. Protein-lysine methyltransferase that selectively catalyzes the trimethylation of EEF1A at 'Lys-79'. The protein is EEF1A lysine methyltransferase 1 of Danio rerio (Zebrafish).